We begin with the raw amino-acid sequence, 247 residues long: 14-3-3 protein gamma (247 aa).

Methionine 1 carries the N-acetylmethionine modification. Valine 2 carries the N-acetylvaline; in 14-3-3 protein gamma, N-terminally processed modification. Positions 2–247 are interaction with SPATA18/MIEAP; the sequence is VDREQLVQKA…QDDDGGEGNN (246 aa). A Phosphoserine modification is found at serine 71. A Phosphotyrosine modification is found at tyrosine 133. Phosphothreonine is present on threonine 145. Serine 215 carries the post-translational modification Phosphoserine. Threonine 234 bears the Phosphothreonine mark. At serine 235 the chain carries Phosphoserine.

This sequence belongs to the 14-3-3 family. As to quaternary structure, homodimer. Part of a complex that contains DSG3, PKP1, YAP1 and YWHAG; the complex is required for localization of DSG3 and YAP1 to the cell membrane in keratinocytes. Interacts with SAMSN1. Interacts with RAF1, SSH1 and CRTC2/TORC2. Interacts with ABL1 (phosphorylated form); the interaction retains it in the cytoplasm. Interacts with GAB2. Interacts with MDM4 (phosphorylated); negatively regulates MDM4 activity toward TP53. Interacts with PKA-phosphorylated AANAT and SIRT2. Interacts with the 'Thr-369' phosphorylated form of DAPK2. Interacts with PI4KB, TBC1D22A and TBC1D22B. Interacts with SLITRK1. Interacts with LRRK2; this interaction is dependent on LRRK2 phosphorylation. Interacts with MARK2 and MARK3. Interacts with MEFV. Interacts with ENDOG, TSC2 and PIK3C3; interaction with ENDOG weakens its interaction with TSC2 and PIK3C3. Interacts with (phosphorylated) WDR24. Interacts with BEST1; this interaction promotes L-glutamate channel activity leading to the positive regulation of NMDA glutamate receptor activity through the L-glutamate secretion. Interacts with PKP1 (when phosphorylated); the interaction results in translocation of PKP1 to the cytoplasm and loss of intercellular adhesion in keratinocytes. Interacts with SPATA18/MIEAP; a protein that also plays a role in MALM. Post-translationally, phosphorylated by various PKC isozymes.

The protein resides in the cytoplasm. It localises to the cytosol. The protein localises to the mitochondrion matrix. In terms of biological role, adapter protein implicated in the regulation of a large spectrum of both general and specialized signaling pathways. Binds to a large number of partners, usually by recognition of a phosphoserine or phosphothreonine motif. Binding generally results in the modulation of the activity of the binding partner. Promotes inactivation of WDR24 component of the GATOR2 complex by binding to phosphorylated WDR24. Participates in the positive regulation of NMDA glutamate receptor activity by promoting the L-glutamate secretion through interaction with BEST1. Reduces keratinocyte intercellular adhesion, via interacting with PKP1 and sequestering it in the cytoplasm, thereby reducing its incorporation into desmosomes. Plays a role in mitochondrial protein catabolic process (also named MALM) that promotes the degradation of damaged proteins inside mitochondria. This chain is 14-3-3 protein gamma, found in Bos taurus (Bovine).